The sequence spans 333 residues: MKKVKIFDLTLRDGSHAKSHQFTPEQMAVLAEQIDSTGVAAIEFGHGNGLGGSALQYGFAAATDREYMEAVAPVVKNADLSIIILPGVGTRHELHLAKEFGAKYARMCTQITEVDIAEQHIKMAKQLGMIPIAVLPCAGIIPVKDTVRYTQMAESYGAEVIYLLDGGGYQLPEQTYERIAAMKKAVDVPIGFHGHNNLQLAVANSKAAVEAGAEYIDCCLKGFGAGAGNCPTEIFAAVMDRMEIDCGIDLYKTMDIAEQYLRPLMPRAMEVDNDRIMLGYAGCYSSFLLFAQRAGARYGVDPRDIIKEIGRRQCTEGQEDICIDVAYALAQKK.

Residues 4-254 (VKIFDLTLRD…DCGIDLYKTM (251 aa)) form the Pyruvate carboxyltransferase domain. 12 to 13 (RD) is a substrate binding site. Aspartate 13 provides a ligand contact to Mn(2+). Histidine 16 acts as the Proton acceptor in catalysis. Position 193 (histidine 193) interacts with substrate. Residues histidine 193 and histidine 195 each coordinate Mn(2+). Tyrosine 284 lines the substrate pocket.

This sequence belongs to the 4-hydroxy-2-oxovalerate aldolase family.

It carries out the reaction (S)-4-hydroxy-2-oxopentanoate = acetaldehyde + pyruvate. The chain is 4-hydroxy-2-oxovalerate aldolase from Desulfitobacterium hafniense (strain DSM 10664 / DCB-2).